We begin with the raw amino-acid sequence, 510 residues long: Bifunctional purine biosynthesis protein PurH (510 aa).

An MGS-like domain is found at 1–143 (MTKRALISVS…KNHSGVLVLV (143 aa)).

Belongs to the PurH family.

The enzyme catalyses (6R)-10-formyltetrahydrofolate + 5-amino-1-(5-phospho-beta-D-ribosyl)imidazole-4-carboxamide = 5-formamido-1-(5-phospho-D-ribosyl)imidazole-4-carboxamide + (6S)-5,6,7,8-tetrahydrofolate. The catalysed reaction is IMP + H2O = 5-formamido-1-(5-phospho-D-ribosyl)imidazole-4-carboxamide. It functions in the pathway purine metabolism; IMP biosynthesis via de novo pathway; 5-formamido-1-(5-phospho-D-ribosyl)imidazole-4-carboxamide from 5-amino-1-(5-phospho-D-ribosyl)imidazole-4-carboxamide (10-formyl THF route): step 1/1. Its pathway is purine metabolism; IMP biosynthesis via de novo pathway; IMP from 5-formamido-1-(5-phospho-D-ribosyl)imidazole-4-carboxamide: step 1/1. This Deinococcus deserti (strain DSM 17065 / CIP 109153 / LMG 22923 / VCD115) protein is Bifunctional purine biosynthesis protein PurH.